The sequence spans 348 residues: Autophagy-related protein 27 (348 aa).

The N-terminal stretch at 1–20 (MYRPDLLAFLLPLLAAPVFS) is a signal peptide. Topologically, residues 21-274 (AETLDCGKIR…DDGGDNSSSH (254 aa)) are lumenal. One can recognise an MRH domain in the interval 24–255 (LDCGKIRADG…TWHTKYACEK (232 aa)). 3 cysteine pairs are disulfide-bonded: C26–C69, C82–C89, and C175–C253. Residues N61 and N84 are each glycosylated (N-linked (GlcNAc...) asparagine). Residues 180–208 (EGTEGEWVSEEKYEKRADEKKDDDKKEDG) are compositionally biased toward basic and acidic residues. The tract at residues 180–219 (EGTEGEWVSEEKYEKRADEKKDDDKKEDGGDKDEGESTLE) is disordered. N-linked (GlcNAc...) asparagine glycosylation is found at N226 and N270. A helical membrane pass occupies residues 275–295 (WGFFTWFVLIAFLLIAGYLIF). The Cytoplasmic portion of the chain corresponds to 296–348 (SSWINFTRYGARGWDLLPHSDTIRDIPYLLKDFIRRILNTVQGTGSRGGYSAV).

This sequence belongs to the ATG27 family. Forms a complex with ATG9 and ATG23.

The protein localises to the cytoplasmic vesicle membrane. The protein resides in the golgi apparatus membrane. It localises to the mitochondrion membrane. It is found in the preautophagosomal structure membrane. Functionally, effector of VPS34 phosphatidylinositol 3-phosphate kinase signaling. Regulates the cytoplasm to vacuole transport (Cvt) vesicle formation. Plays a role in ATG protein retrieval from the pre-autophagosomal structure (PAS) and is especially required for autophagy-dependent cycling of ATG9. Autophagy is required for proper vegetative growth, asexual/sexual reproduction, and full virulence. Autophagy is particularly involved in the biosynthesis of deoxynivalenol (DON), an important virulence determinant. The chain is Autophagy-related protein 27 from Gibberella zeae (strain ATCC MYA-4620 / CBS 123657 / FGSC 9075 / NRRL 31084 / PH-1) (Wheat head blight fungus).